Reading from the N-terminus, the 440-residue chain is ATP-dependent protease ATPase subunit HslU (440 aa).

ATP is bound by residues I18, 60–65 (GVGKTE), D252, E318, and R390.

This sequence belongs to the ClpX chaperone family. HslU subfamily. In terms of assembly, a double ring-shaped homohexamer of HslV is capped on each side by a ring-shaped HslU homohexamer. The assembly of the HslU/HslV complex is dependent on binding of ATP.

It localises to the cytoplasm. Functionally, ATPase subunit of a proteasome-like degradation complex; this subunit has chaperone activity. The binding of ATP and its subsequent hydrolysis by HslU are essential for unfolding of protein substrates subsequently hydrolyzed by HslV. HslU recognizes the N-terminal part of its protein substrates and unfolds these before they are guided to HslV for hydrolysis. The chain is ATP-dependent protease ATPase subunit HslU from Acidithiobacillus ferrooxidans (strain ATCC 23270 / DSM 14882 / CIP 104768 / NCIMB 8455) (Ferrobacillus ferrooxidans (strain ATCC 23270)).